The following is a 428-amino-acid chain: Kynureninase (428 aa).

Pyridoxal 5'-phosphate contacts are provided by residues T104, T105, 132 to 135 (FPSD), D213, H216, and Y238. K239 carries the post-translational modification N6-(pyridoxal phosphate)lysine. Pyridoxal 5'-phosphate is bound by residues W267 and T295.

The protein belongs to the kynureninase family. Homodimer. Pyridoxal 5'-phosphate serves as cofactor.

The enzyme catalyses L-kynurenine + H2O = anthranilate + L-alanine + H(+). It catalyses the reaction 3-hydroxy-L-kynurenine + H2O = 3-hydroxyanthranilate + L-alanine + H(+). It functions in the pathway amino-acid degradation; L-kynurenine degradation; L-alanine and anthranilate from L-kynurenine: step 1/1. The protein operates within cofactor biosynthesis; NAD(+) biosynthesis; quinolinate from L-kynurenine: step 2/3. Functionally, catalyzes the cleavage of L-kynurenine (L-Kyn) and L-3-hydroxykynurenine (L-3OHKyn) into anthranilic acid (AA) and 3-hydroxyanthranilic acid (3-OHAA), respectively. The sequence is that of Kynureninase from Bacillus cereus (strain ATCC 10987 / NRS 248).